The primary structure comprises 549 residues: Arginine--tRNA ligase (549 aa).

Residues 113–123 (ANPDGPLHIGH) carry the 'HIGH' region motif.

Belongs to the class-I aminoacyl-tRNA synthetase family.

The protein localises to the cytoplasm. The catalysed reaction is tRNA(Arg) + L-arginine + ATP = L-arginyl-tRNA(Arg) + AMP + diphosphate. This chain is Arginine--tRNA ligase (argS), found in Archaeoglobus fulgidus (strain ATCC 49558 / DSM 4304 / JCM 9628 / NBRC 100126 / VC-16).